The following is a 708-amino-acid chain: RUN and FYVE domain-containing protein 1 (708 aa).

A compositionally biased stretch (basic and acidic residues) spans 1-17 (MADREGGCAAGRGRELE). A disordered region spans residues 1-57 (MADREGGCAAGRGRELEPELEPGPGPGSALEPGEEFEIVDRSQLPGPGDLRSATRPR). The region spanning 139 to 271 (DADHAPLQQF…LDANLCLKGE (133 aa)) is the RUN domain. Residues 321–374 (TVGDLQTKIDGLEKTNSKLQEELSAATDRICSLQEEQQQLREQNELIRERSEKS) adopt a coiled-coil conformation. Phosphotyrosine is present on residues Y389 and Y400. A coiled-coil region spans residues 405–617 (KQLKEEKKVR…QALQEMGLHL (213 aa)). The segment at 493 to 522 (QVMSSMKQMEERLQHSERARQGAEERSHKL) is disordered. Basic and acidic residues predominate over residues 500 to 522 (QMEERLQHSERARQGAEERSHKL). Residues 615 to 625 (LHLSQSKLKME) are interaction with RAB4. S620 is subject to Phosphoserine. The FYVE-type zinc finger occupies 642-700 (DDEATHCRQCEKEFSISRRKHHCRNCGHIFCNTCSSNELALPSYPKPVRVCDSCHTLLL). Zn(2+)-binding residues include C648, C651, C664, C667, C672, C675, C692, and C695.

As to quaternary structure, self-assembles through coiled coil domains to drive ELVA (endo-lysosomal vesicular assembly) formation. Interacts with BMX. May interact with SSB. Interacts with RAB4 and RAB5 that have been activated by GTP-binding. Interacts WITH RAB14 and RAB4B (GTP-bound form); the interactions allow endosomal tethering and fusion. Interacts with ARL8B (GTP-bound form); the interaction is required for RUFY1 endosomal location and promotes interaction with RAB14. In terms of processing, phosphorylation on Tyr-389 and/or Tyr-400 is required for interaction with BMX and endosomal targeting. In terms of tissue distribution, broadly expressed, with highest levels in lung, testis, kidney and brain.

The protein resides in the early endosome membrane. Functionally, activating adapter involved in cargo sorting from early/recycling endosomes. Regulates retrieval of proteins from endosomes to the trans-Golgi network through interaction with the dynein-dynactin complex. Dual effector of RAB4B and RAB14, mediates a cooperative interaction allowing endosomal tethering and fusion. Binds phospholipid vesicles containing phosphatidylinositol 3-phosphate and participates in early endosomal trafficking. In oocytes, self-assembles to form a protein matrix which hold together endolysosomes, autophagosomes and proteasomes and generate non-membrane-bound compartments called endo-lysosomal vesicular assemblies (ELVAs). In immature oocytes, ELVAs sequester ubiquitinated protein aggregates and degrade them upon oocyte maturation. The chain is RUN and FYVE domain-containing protein 1 from Homo sapiens (Human).